Consider the following 201-residue polypeptide: Lipoprotein signal peptidase (201 aa).

A run of 3 helical transmembrane segments spans residues 33–53 (LLLS…VLAV), 86–106 (GYTW…FWMG), and 110–130 (VSSW…GNLV). Residues Asp-146 and Asp-160 contribute to the active site. A helical transmembrane segment spans residues 158–178 (VADPSVVVGAILLVVLSIFGF).

The protein belongs to the peptidase A8 family.

It is found in the cell membrane. It catalyses the reaction Release of signal peptides from bacterial membrane prolipoproteins. Hydrolyzes -Xaa-Yaa-Zaa-|-(S,diacylglyceryl)Cys-, in which Xaa is hydrophobic (preferably Leu), and Yaa (Ala or Ser) and Zaa (Gly or Ala) have small, neutral side chains.. It participates in protein modification; lipoprotein biosynthesis (signal peptide cleavage). This protein specifically catalyzes the removal of signal peptides from prolipoproteins. This is Lipoprotein signal peptidase from Mycobacterium leprae (strain Br4923).